Reading from the N-terminus, the 715-residue chain is MIYQGETLTVSYLEDGIAELRFDAPGSVNKLDRATLLSLSEAIAALQQERELKGLILTSGKDAFIVGADITEFLELFDLPQADLLGWLKKANDIFSAIEDLPVPTLSAIKGHALGGGCETILSTDFRLADTSAKIGLPETKLGIMPGFGGTVRLPRVIGADNALEWITTGKDYRADDALKVGAIDAVVAPDALQSAAVQMIKDAVKGKLDWQGRRAAKKAPLRLSKLEAMMSFTTAAGMVAAVAGKHYPAPMTAVKTVEAAAGMSRDEALAVEAQGFIKLAKTDVAKALVGIFLNDQHIKALAKKAAKQAAKATSHAAVLGAGIMGGGIAYQSASKGIPAVMKDINEKALALGMGEATKLLNGQLEKGRIDGIKMGQVLSAITPTLSYDNVKHVDVVVEAVVENPKVKAAVLGEVEGIIGEDAVLASNTSTIPISLLAKELKRPQNFCGMHFFNPVHRMPLVEIIRGEQTSDETINRVVAYAAAMGKSPVVVNDCPGFFVNRVLFPYFFGFNKLVADGADFAAVDKVMEKEFGWPMGPAYLLDVVGIDTGHHAGDVMAQGFPARMSKEGRTAIDVMYEVNRFGQKNGKGFYAYEQDKKGKPKKVADAASYELLAPIAKPKQDFDKDAIIARMMIPMINEVVLCLEEGIVATPAEADIALVYGLGFPPFRGGVFRYLDTIGLDRYVAMADQYADLGPLYRVSDKLREMAAQGKTFY.

Positions methionine 1–alanine 189 are enoyl-CoA hydratase/isomerase. A substrate-binding site is contributed by aspartate 296. The tract at residues alanine 311–tyrosine 715 is 3-hydroxyacyl-CoA dehydrogenase. NAD(+) contacts are provided by residues methionine 325, aspartate 344, valine 401–glutamate 403, lysine 408, and serine 430. Histidine 451 acts as the For 3-hydroxyacyl-CoA dehydrogenase activity in catalysis. Asparagine 454 is an NAD(+) binding site. 2 residues coordinate substrate: asparagine 501 and tyrosine 661.

The protein in the N-terminal section; belongs to the enoyl-CoA hydratase/isomerase family. In the C-terminal section; belongs to the 3-hydroxyacyl-CoA dehydrogenase family. In terms of assembly, heterotetramer of two alpha chains (FadB) and two beta chains (FadA).

It carries out the reaction a (3S)-3-hydroxyacyl-CoA + NAD(+) = a 3-oxoacyl-CoA + NADH + H(+). The catalysed reaction is a (3S)-3-hydroxyacyl-CoA = a (2E)-enoyl-CoA + H2O. The enzyme catalyses a 4-saturated-(3S)-3-hydroxyacyl-CoA = a (3E)-enoyl-CoA + H2O. It catalyses the reaction (3S)-3-hydroxybutanoyl-CoA = (3R)-3-hydroxybutanoyl-CoA. It carries out the reaction a (3Z)-enoyl-CoA = a 4-saturated (2E)-enoyl-CoA. The catalysed reaction is a (3E)-enoyl-CoA = a 4-saturated (2E)-enoyl-CoA. The protein operates within lipid metabolism; fatty acid beta-oxidation. Functionally, involved in the aerobic and anaerobic degradation of long-chain fatty acids via beta-oxidation cycle. Catalyzes the formation of 3-oxoacyl-CoA from enoyl-CoA via L-3-hydroxyacyl-CoA. It can also use D-3-hydroxyacyl-CoA and cis-3-enoyl-CoA as substrate. The polypeptide is Fatty acid oxidation complex subunit alpha (Aeromonas hydrophila subsp. hydrophila (strain ATCC 7966 / DSM 30187 / BCRC 13018 / CCUG 14551 / JCM 1027 / KCTC 2358 / NCIMB 9240 / NCTC 8049)).